We begin with the raw amino-acid sequence, 366 residues long: Ribosomal RNA large subunit methyltransferase M (366 aa).

S-adenosyl-L-methionine contacts are provided by residues Ser-188, Cys-221–Gly-224, Asp-240, Asp-260, and Asp-277. The active-site Proton acceptor is Lys-306.

This sequence belongs to the class I-like SAM-binding methyltransferase superfamily. RNA methyltransferase RlmE family. RlmM subfamily. As to quaternary structure, monomer.

Its subcellular location is the cytoplasm. The enzyme catalyses cytidine(2498) in 23S rRNA + S-adenosyl-L-methionine = 2'-O-methylcytidine(2498) in 23S rRNA + S-adenosyl-L-homocysteine + H(+). Its function is as follows. Catalyzes the 2'-O-methylation at nucleotide C2498 in 23S rRNA. In Cronobacter sakazakii (strain ATCC BAA-894) (Enterobacter sakazakii), this protein is Ribosomal RNA large subunit methyltransferase M.